The following is a 92-amino-acid chain: Small ribosomal subunit protein uS19 (92 aa).

Belongs to the universal ribosomal protein uS19 family.

Functionally, protein S19 forms a complex with S13 that binds strongly to the 16S ribosomal RNA. This Tolumonas auensis (strain DSM 9187 / NBRC 110442 / TA 4) protein is Small ribosomal subunit protein uS19.